The sequence spans 122 residues: Small ribosomal subunit protein bS6 (122 aa).

The protein belongs to the bacterial ribosomal protein bS6 family.

Binds together with bS18 to 16S ribosomal RNA. The chain is Small ribosomal subunit protein bS6 from Neisseria gonorrhoeae (strain ATCC 700825 / FA 1090).